The chain runs to 423 residues: Protein IQ-DOMAIN 16 (423 aa).

IQ domains lie at 99-127 (RHWA…GIVK) and 128-150 (LQAL…CIKA). Positions 231–251 (QKKLEIAIKREKAQALALSNQ) form a coiled coil. The segment at 235–252 (EIAIKREKAQALALSNQI) is calmodulin-binding.

Belongs to the IQD family. As to quaternary structure, binds to multiple calmodulin (CaM) in the presence of Ca(2+) and CaM-like proteins.

Its subcellular location is the cytoplasm. The protein resides in the cytoskeleton. It is found in the cell membrane. In terms of biological role, may be involved in cooperative interactions with calmodulins or calmodulin-like proteins. Recruits calmodulin proteins to microtubules, thus being a potential scaffold in cellular signaling and trafficking. Regulates cell shape and elongation in aerial organs (i.e. cotyledons, leaves, and hypocotyls) probably by regulating cortical microtubules (MT) arrays orientation. May associate with nucleic acids and regulate gene expression at the transcriptional or post-transcriptional level. This chain is Protein IQ-DOMAIN 16, found in Arabidopsis thaliana (Mouse-ear cress).